Consider the following 142-residue polypeptide: MAPKKKVAGLIKLQIVAGQANPAPPVGPALGQHGVNIMEFCKAYNAATENQRGNVIPVEITVYEDRSFTFTLKTPPAAKLLLKAAGVAKGSAEPHKTKVAKVTWDQVREIAETKKTDLNANDVDAAAKIIAGTARSMGITVE.

This sequence belongs to the universal ribosomal protein uL11 family. As to quaternary structure, part of the ribosomal stalk of the 50S ribosomal subunit. Interacts with L10 and the large rRNA to form the base of the stalk. L10 forms an elongated spine to which L12 dimers bind in a sequential fashion forming a multimeric L10(L12)X complex. In terms of processing, one or more lysine residues are methylated.

Forms part of the ribosomal stalk which helps the ribosome interact with GTP-bound translation factors. The sequence is that of Large ribosomal subunit protein uL11 from Mycobacterium tuberculosis (strain ATCC 25177 / H37Ra).